The primary structure comprises 270 residues: NAD kinase (270 aa).

The active-site Proton acceptor is the Asp57. Residues 57 to 58, 125 to 126, Arg150, and Asn227 each bind NAD(+); these read DG and NE.

It belongs to the NAD kinase family. A divalent metal cation is required as a cofactor.

It is found in the cytoplasm. The enzyme catalyses NAD(+) + ATP = ADP + NADP(+) + H(+). Functionally, involved in the regulation of the intracellular balance of NAD and NADP, and is a key enzyme in the biosynthesis of NADP. Catalyzes specifically the phosphorylation on 2'-hydroxyl of the adenosine moiety of NAD to yield NADP. This is NAD kinase from Ureaplasma parvum serovar 3 (strain ATCC 700970).